We begin with the raw amino-acid sequence, 192 residues long: Xanthine phosphoribosyltransferase (192 aa).

Xanthine contacts are provided by leucine 20 and asparagine 27. 128 to 132 (AHGEA) contacts 5-phospho-alpha-D-ribose 1-diphosphate. Lysine 156 is a binding site for xanthine.

The protein belongs to the purine/pyrimidine phosphoribosyltransferase family. Xpt subfamily. In terms of assembly, homodimer.

It localises to the cytoplasm. The enzyme catalyses XMP + diphosphate = xanthine + 5-phospho-alpha-D-ribose 1-diphosphate. The protein operates within purine metabolism; XMP biosynthesis via salvage pathway; XMP from xanthine: step 1/1. Its function is as follows. Converts the preformed base xanthine, a product of nucleic acid breakdown, to xanthosine 5'-monophosphate (XMP), so it can be reused for RNA or DNA synthesis. In Lactobacillus johnsonii (strain CNCM I-12250 / La1 / NCC 533), this protein is Xanthine phosphoribosyltransferase.